The sequence spans 382 residues: Alkane 1-monooxygenase 2 (382 aa).

The next 4 membrane-spanning stretches (helical) occupy residues 17-37 (GYLA…FVGV), 45-65 (WAWF…YLVG), 88-108 (VSAI…GHIF), and 114-134 (GLLG…IIAI). Positions 138, 142, 168, 172, and 173 each coordinate Fe cation. Residues 236-256 (ALFAATFGLLWGWQGVVFFLG) traverse the membrane as a helical segment. 3 residues coordinate Fe cation: His-312, His-315, and His-316.

This sequence belongs to the fatty acid desaturase type 1 family. AlkB subfamily. Requires Fe(3+) as cofactor.

It localises to the cell inner membrane. It carries out the reaction octane + 2 reduced [rubredoxin] + O2 + 2 H(+) = 2 oxidized [rubredoxin] + octan-1-ol + H2O. Its pathway is hydrocarbon metabolism; alkane degradation. Its function is as follows. Catalyzes the hydroxylation of n-alkanes in the presence of a NADH-rubredoxin reductase and rubredoxin. It preferably hydroxylases C8-C16 hydrocarbons. This is Alkane 1-monooxygenase 2 (alkB2) from Alcanivorax borkumensis (strain ATCC 700651 / DSM 11573 / NCIMB 13689 / SK2).